A 37-amino-acid polypeptide reads, in one-letter code: Large ribosomal subunit protein bL36c (37 aa).

It belongs to the bacterial ribosomal protein bL36 family.

The protein resides in the plastid. This chain is Large ribosomal subunit protein bL36c, found in Cuscuta gronovii (Common dodder).